Here is a 119-residue protein sequence, read N- to C-terminus: Large ribosomal subunit protein uL18 (119 aa).

It belongs to the universal ribosomal protein uL18 family. In terms of assembly, part of the 50S ribosomal subunit; part of the 5S rRNA/L5/L18/L25 subcomplex. Contacts the 5S and 23S rRNAs.

This is one of the proteins that bind and probably mediate the attachment of the 5S RNA into the large ribosomal subunit, where it forms part of the central protuberance. The polypeptide is Large ribosomal subunit protein uL18 (Clostridium botulinum (strain Okra / Type B1)).